The primary structure comprises 363 residues: Cytochrome P450 CYP82D47 (363 aa).

C342 contacts heme.

Belongs to the cytochrome P450 family. Heme serves as cofactor.

In terms of biological role, probable heme-thiolate monooxygenase. In Panax ginseng (Korean ginseng), this protein is Cytochrome P450 CYP82D47.